A 556-amino-acid chain; its full sequence is Formate--tetrahydrofolate ligase 1 (556 aa).

Residue 65-72 participates in ATP binding; the sequence is TPAGEGKS.

It belongs to the formate--tetrahydrofolate ligase family.

It catalyses the reaction (6S)-5,6,7,8-tetrahydrofolate + formate + ATP = (6R)-10-formyltetrahydrofolate + ADP + phosphate. It participates in one-carbon metabolism; tetrahydrofolate interconversion. This is Formate--tetrahydrofolate ligase 1 from Streptococcus pyogenes serotype M4 (strain MGAS10750).